The sequence spans 400 residues: Selection and upkeep of intraepithelial T-cells protein 2 (400 aa).

The first 21 residues, M1–S21, serve as a signal peptide directing secretion. Over S22 to R240 the chain is Extracellular. An Ig-like V-type domain is found at E23 to T133. 2 disulfide bridges follow: C46–C120 and C160–C214. The Ig-like C1-type domain maps to A139 to E225. A glycan (N-linked (GlcNAc...) asparagine) is linked at N197. Residues V241 to C261 traverse the membrane as a helical segment. At V262–K280 the chain is on the cytoplasmic side. Residues S281–L301 form a helical membrane-spanning segment. Residues K302–D321 lie on the Extracellular side of the membrane. The helical transmembrane segment at I322–F342 threads the bilayer. Residues R343 to F400 are Cytoplasmic-facing.

The protein belongs to the SKINT family. In terms of tissue distribution, expressed in skin, thymus and mammary gland.

Its subcellular location is the membrane. Its function is as follows. May act by engaging a cell surface molecule on immature T-cells in the embryonic thymus. The sequence is that of Selection and upkeep of intraepithelial T-cells protein 2 (Skint2) from Mus musculus (Mouse).